Reading from the N-terminus, the 158-residue chain is SsrA-binding protein (158 aa).

Residues 131–158 (KQLHDKRQTEKERDWNKQKQRILQTNQR) form a disordered region. A compositionally biased stretch (basic and acidic residues) spans 132–147 (QLHDKRQTEKERDWNK).

This sequence belongs to the SmpB family.

The protein resides in the cytoplasm. Required for rescue of stalled ribosomes mediated by trans-translation. Binds to transfer-messenger RNA (tmRNA), required for stable association of tmRNA with ribosomes. tmRNA and SmpB together mimic tRNA shape, replacing the anticodon stem-loop with SmpB. tmRNA is encoded by the ssrA gene; the 2 termini fold to resemble tRNA(Ala) and it encodes a 'tag peptide', a short internal open reading frame. During trans-translation Ala-aminoacylated tmRNA acts like a tRNA, entering the A-site of stalled ribosomes, displacing the stalled mRNA. The ribosome then switches to translate the ORF on the tmRNA; the nascent peptide is terminated with the 'tag peptide' encoded by the tmRNA and targeted for degradation. The ribosome is freed to recommence translation, which seems to be the essential function of trans-translation. In Teredinibacter turnerae (strain ATCC 39867 / T7901), this protein is SsrA-binding protein.